The sequence spans 712 residues: Aryl hydrocarbon receptor nuclear translocator 2 (712 aa).

Disordered regions lie at residues 1–20 (MATP…PGSV) and 35–74 (MAGA…IERR). R42 carries the omega-N-methylarginine modification. Residues 63–73 (FSRENHSEIER) show a composition bias toward basic and acidic residues. The bHLH domain maps to 63 to 116 (FSRENHSEIERRRRNKMTQYITELSDMVPTCSALARKPDKLTILRMAVSHMKSM). PAS domains lie at 134 to 209 (TEQE…MTGR) and 323 to 393 (PVCM…VKLK). The 44-residue stretch at 398–441 (SVMYRFRTKNREWLLIRTSSFTFQNPYSDEIEYVICTNTNVKQL) folds into the PAC domain. Positions 573-712 (AWTGSRPPFP…DLGMFPPFSE (140 aa)) are disordered. 2 stretches are compositionally biased toward low complexity: residues 597 to 626 (SSHP…AYPS) and 653 to 675 (SQWQ…QPGQ).

Efficient DNA binding requires dimerization with another bHLH protein. Heterodimer with NPAS4 or SIM1. Heterodimer with the aryl hydrocarbon receptor (AHR) or the SIM1 protein. Interacts with TACC3.

The protein localises to the nucleus. Functionally, transcription factor that plays a role in the development of the hypothalamo-pituitary axis, postnatal brain growth, and visual and renal function. Specifically recognizes the xenobiotic response element (XRE). The chain is Aryl hydrocarbon receptor nuclear translocator 2 (Arnt2) from Rattus norvegicus (Rat).